A 256-amino-acid polypeptide reads, in one-letter code: Ubiquinone/menaquinone biosynthesis C-methyltransferase UbiE (256 aa).

The span at 1 to 12 shows a compositional bias: basic and acidic residues; that stretch reads MNDQRKGDHAEP. The tract at residues 1 to 23 is disordered; the sequence is MNDQRKGDHAEPTTHFGYQDVPE. S-adenosyl-L-methionine is bound by residues Thr-79, Asp-100, and 128–129; that span reads DA.

It belongs to the class I-like SAM-binding methyltransferase superfamily. MenG/UbiE family.

The enzyme catalyses a 2-demethylmenaquinol + S-adenosyl-L-methionine = a menaquinol + S-adenosyl-L-homocysteine + H(+). The catalysed reaction is a 2-methoxy-6-(all-trans-polyprenyl)benzene-1,4-diol + S-adenosyl-L-methionine = a 5-methoxy-2-methyl-3-(all-trans-polyprenyl)benzene-1,4-diol + S-adenosyl-L-homocysteine + H(+). The protein operates within quinol/quinone metabolism; menaquinone biosynthesis; menaquinol from 1,4-dihydroxy-2-naphthoate: step 2/2. It participates in cofactor biosynthesis; ubiquinone biosynthesis. Methyltransferase required for the conversion of demethylmenaquinol (DMKH2) to menaquinol (MKH2) and the conversion of 2-polyprenyl-6-methoxy-1,4-benzoquinol (DDMQH2) to 2-polyprenyl-3-methyl-6-methoxy-1,4-benzoquinol (DMQH2). In Pseudomonas putida (strain ATCC 700007 / DSM 6899 / JCM 31910 / BCRC 17059 / LMG 24140 / F1), this protein is Ubiquinone/menaquinone biosynthesis C-methyltransferase UbiE.